The primary structure comprises 500 residues: NAD(P)H-quinone oxidoreductase chain 4, chloroplastic (500 aa).

14 helical membrane-spanning segments follow: residues 4 to 24 (FPWLTIIVVFPISAGSLMLFL), 35 to 55 (YTICICILELLITTYAFCYNF), 87 to 107 (IGTILLTGFITTLATLAAFPV), 113 to 130 (LFHFLMLAMYSGQIGSFS), 134 to 154 (LLLFFIMWELELIPVYLLLSM), 167 to 187 (FILYTAGSSIFLLIGVLGISL), 211 to 231 (ILFYIGFVIALTVKSPIIPLH), 242 to 262 (HYSTCMLLAGILLKMGAYGLV), 272 to 292 (AHSLFSPWLMAVGTIQIIYAA), 305 to 325 (IAYSSVSHMGFIIIGIGSITD), 330 to 350 (GAILQIISHGFIGAALFFLAG), 386 to 406 (LALPGMSGFVAELIVFFGIIT), 416 to 436 (ILIIFVMAIGIILTPIYLLSM), and 462 to 482 (LFLSISILLPIIGIGIYPDFV).

The protein belongs to the complex I subunit 4 family.

The protein resides in the plastid. It is found in the chloroplast thylakoid membrane. The catalysed reaction is a plastoquinone + NADH + (n+1) H(+)(in) = a plastoquinol + NAD(+) + n H(+)(out). It catalyses the reaction a plastoquinone + NADPH + (n+1) H(+)(in) = a plastoquinol + NADP(+) + n H(+)(out). This Draba nemorosa (Woodland whitlowgrass) protein is NAD(P)H-quinone oxidoreductase chain 4, chloroplastic.